The primary structure comprises 240 residues: Probable transcriptional regulatory protein HPAG1_0159 (240 aa).

The protein belongs to the TACO1 family.

It localises to the cytoplasm. The sequence is that of Probable transcriptional regulatory protein HPAG1_0159 from Helicobacter pylori (strain HPAG1).